Consider the following 456-residue polypeptide: ATP-dependent protease ATPase subunit HslU (456 aa).

ATP is bound by residues Val-18, 60–65 (GVGKTE), Asp-269, Glu-334, and Arg-406.

The protein belongs to the ClpX chaperone family. HslU subfamily. As to quaternary structure, a double ring-shaped homohexamer of HslV is capped on each side by a ring-shaped HslU homohexamer. The assembly of the HslU/HslV complex is dependent on binding of ATP.

Its subcellular location is the cytoplasm. In terms of biological role, ATPase subunit of a proteasome-like degradation complex; this subunit has chaperone activity. The binding of ATP and its subsequent hydrolysis by HslU are essential for unfolding of protein substrates subsequently hydrolyzed by HslV. HslU recognizes the N-terminal part of its protein substrates and unfolds these before they are guided to HslV for hydrolysis. This Desulfosudis oleivorans (strain DSM 6200 / JCM 39069 / Hxd3) (Desulfococcus oleovorans) protein is ATP-dependent protease ATPase subunit HslU.